A 2382-amino-acid polypeptide reads, in one-letter code: Serine/threonine-protein kinase WNK1 (2382 aa).

Disordered regions lie at residues 1–81 (MSGG…RFFR) and 95–203 (LPGL…QQDD). Residues Ser-15 and Ser-19 each carry the phosphoserine modification. Residues 50-66 (RTEEYRRRRHTMDKDSR) are compositionally biased toward basic and acidic residues. The residue at position 60 (Thr-60) is a Phosphothreonine. Composition is skewed to low complexity over residues 95–108 (LPGL…PSIP) and 125–153 (VTAT…GPAP). Residues Ser-167 and Ser-174 each carry the phosphoserine modification. A Protein kinase domain is found at 221–479 (LKFDIEIGRG…IKDLLNHAFF (259 aa)). Residue Ser-231 coordinates ATP. Residues Phe-283 and Leu-299 each coordinate chloride. Residues 301 to 304 (TELM) and Lys-351 each bind ATP. Residue Asp-368 is the Proton acceptor of the active site. Chloride contacts are provided by Leu-369 and Leu-371. Residues Ser-378 and Ser-382 each carry the phosphoserine; by autocatalysis modification. An autoinhibitory domain region spans residues 488-555 (ELAEEDDGEK…VCEGDHKTMA (68 aa)). The segment covering 573 to 588 (QLVREEQEKKKQEESS) has biased composition (basic and acidic residues). 3 disordered regions span residues 573–779 (QLVR…QPQA), 1018–1041 (QPGG…STQG), and 1053–1119 (VAQT…SRPK). Residues 598-614 (ASQTGIKQLPSASTGIP) are compositionally biased toward polar residues. Low complexity predominate over residues 615–625 (TASTTSASVST). The interaction with KLHL3 stretch occupies residues 628–638 (EPEEPEADQHQ). The span at 637–689 (HQQLQYQQPSISVLSDGTVDSGQGSSVFTESRVSSQQTVSYGSQHEQAHSTGT) shows a compositional bias: polar residues. The segment covering 709–779 (PPSSVAQGQS…TAQPVSQPQA (71 aa)) has biased composition (low complexity). Positions 1025-1041 (QAPTTSSQQAVLESTQG) are enriched in polar residues. The segment covering 1053-1077 (VAQTQATQPTTLASSVDSAHSDVAS) has biased composition (low complexity). The span at 1080–1090 (SDGNENVPSSS) shows a compositional bias: polar residues. Basic residues predominate over residues 1098–1119 (TKRHYRKSVRSRSRHEKTSRPK). Positions 1257 to 1260 (RFIV) match the RFXV motif 1 motif. At Ser-1261 the chain carries Phosphoserine. Composition is skewed to low complexity over residues 1457 to 1467 (SASAGGSTATP) and 1733 to 1745 (QVST…TSGV). 2 disordered regions span residues 1457-1476 (SASA…AVVS) and 1733-1790 (QVST…TQSQ). Thr-1848 carries the post-translational modification Phosphothreonine. Residues 1859-1862 (RFQV) carry the RFXV motif 2 motif. The interval 1866–1948 (ADGAQKEGKN…QPTKVGRFQV (83 aa)) is disordered. Basic and acidic residues predominate over residues 1869 to 1884 (AQKEGKNKSEDAKSVH). Over residues 1887 to 1905 (SSTSESSVLSSSSPESTLV) the composition is skewed to low complexity. Polar residues predominate over residues 1927 to 1940 (KTTASEAKSDTGQP). Short sequence motifs (RFXV motif) lie at residues 1945–1948 (RFQV) and 1957–1960 (RFSV). 7 positions are modified to phosphoserine: Ser-1978, Ser-2002, Ser-2011, Ser-2012, Ser-2027, Ser-2029, and Ser-2032. The span at 1994–2003 (PKKEKPELSE) shows a compositional bias: basic and acidic residues. 2 disordered regions span residues 1994-2069 (PKKE…DIED) and 2101-2196 (LYTK…NLYS). A compositionally biased stretch (low complexity) spans 2035–2062 (QLSSKSLPSQNLSQSLSNSFNSSYMSSD). The residue at position 2121 (Ser-2121) is a Phosphoserine. Residues 2122-2134 (GRRRRPTKSKGSK) show a composition bias toward basic residues. Over residues 2135 to 2145 (SSRSSSLGNKS) the composition is skewed to low complexity. Composition is skewed to polar residues over residues 2146 to 2167 (PQLS…QQTL) and 2175 to 2196 (ESGQ…NLYS). The amphipathic alpha-helix stretch occupies residues 2241 to 2261 (SRKGTFTDDLHKLVDNWARDA). A phosphoserine mark is found at Ser-2270 and Ser-2286. Residues 2332–2352 (PFGAQWSGTGGPAPQPLGQFQ) are disordered. 2 positions are modified to phosphoserine: Ser-2370 and Ser-2372.

This sequence belongs to the protein kinase superfamily. Ser/Thr protein kinase family. WNK subfamily. Interacts with WNK3. Interacts with WNK4; inhibiting the activity of WNK4. Interacts with SGK1; promoting its activation. Associates with the mTORC2 complex. Interacts with UVRAG. Interacts (via amphipathic alpha-helix region) with EMC2; promoting the ER membrane protein complex assembly. As to quaternary structure, interacts with isoform 1; inhibiting isoform 1 activity. It depends on Mg(2+) as a cofactor. Autophosphorylated at Ser-378 and Ser-382, promoting its activity. Autophosphorylation at Ser-382 is inhibited by intracellular calcium. Phosphorylation at Thr-60 increases ability to activate SGK1. Post-translationally, ubiquitinated by the BCR(KLHL3) complex, leading to its degradation. Also ubiquitinated by the BCR(KLHL2) complex. In terms of processing, may be O-glycosylated. As to expression, widely expressed, with highest levels observed in the testis, heart, kidney and skeletal muscle. In terms of tissue distribution, strong expression in dorsal root ganglia and spinal cord. This isoform is kidney-specific and specifically expressed in the distal convoluted tubule (DCT) and connecting tubule (CNT) of the nephron.

The protein localises to the cytoplasm. It is found in the nucleus. The protein resides in the cytoskeleton. It localises to the spindle. It catalyses the reaction L-seryl-[protein] + ATP = O-phospho-L-seryl-[protein] + ADP + H(+). The catalysed reaction is L-threonyl-[protein] + ATP = O-phospho-L-threonyl-[protein] + ADP + H(+). Activated in response to hyperosmotic stress: cell shrinkage promotes formation of a membraneless compartment that concentrates WNK1 with its substrates, OXSR1/OSR1 and STK39/SPAK. Activation requires autophosphorylation of Ser-382 and, to a lower extent, Ser-378. Autophosphorylation and subsequent activation is inhibited by increases in intracellular ionic strength: Cl(-) potently inhibits WNK1 kinase activity via direct binding. Also inhibited by K(+) ions. Inhibited by small compounds staurosporine, tyrphostin 47, as well as Src tyrosine kinase inhibitors PP1 and PP2. Functionally, serine/threonine-protein kinase component of the WNK1-SPAK/OSR1 kinase cascade, which acts as a key regulator of blood pressure and regulatory volume increase by promoting ion influx. WNK1 mediates regulatory volume increase in response to hyperosmotic stress by acting as a molecular crowding sensor, which senses cell shrinkage and mediates formation of a membraneless compartment by undergoing liquid-liquid phase separation. The membraneless compartment concentrates WNK1 with its substrates, OXSR1/OSR1 and STK39/SPAK, promoting WNK1-dependent phosphorylation and activation of downstream kinases OXSR1/OSR1 and STK39/SPAK. Following activation, OXSR1/OSR1 and STK39/SPAK catalyze phosphorylation of ion cotransporters SLC12A1/NKCC2, SLC12A2/NKCC1, SLC12A5/KCC2 and SLC12A6/KCC3, regulating their activity. Phosphorylation of Na-K-Cl cotransporters SLC12A2/NKCC1 and SLC12A2/NKCC1 promote their activation and ion influx; simultaneously, phosphorylation of K-Cl cotransporters SLC12A5/KCC2 and SLC12A6/KCC3 inhibit their activity, blocking ion efflux. Also acts as a regulator of angiogenesis in endothelial cells via activation of OXSR1/OSR1 and STK39/SPAK: activation of OXSR1/OSR1 regulates chemotaxis and invasion, while STK39/SPAK regulates endothelial cell proliferation. Also acts independently of the WNK1-SPAK/OSR1 kinase cascade by catalyzing phosphorylation of other substrates, such as SYT2, PCF11 and NEDD4L. Mediates phosphorylation of SYT2, regulating SYT2 association with phospholipids and membrane-binding. Regulates mRNA export in the nucleus by mediating phosphorylation of PCF11, thereby decreasing the association between PCF11 and POLR2A/RNA polymerase II and promoting mRNA export to the cytoplasm. Acts as a negative regulator of autophagy. Required for the abscission step during mitosis, independently of the WNK1-SPAK/OSR1 kinase cascade. May also play a role in actin cytoskeletal reorganization. Also acts as a scaffold protein independently of its protein kinase activity: negatively regulates cell membrane localization of various transporters and channels, such as SLC4A4, SLC26A6, SLC26A9, TRPV4 and CFTR. Involved in the regulation of epithelial Na(+) channel (ENaC) by promoting activation of SGK1 in a kinase-independent manner: probably acts as a scaffold protein that promotes the recruitment of SGK1 to the mTORC2 complex in response to chloride, leading to mTORC2-dependent phosphorylation and activation of SGK1. Acts as an assembly factor for the ER membrane protein complex independently of its protein kinase activity: associates with EMC2 in the cytoplasm via its amphipathic alpha-helix, and prevents EMC2 ubiquitination and subsequent degradation, thereby promoting EMC2 stabilization. In terms of biological role, kinase-defective isoform specifically expressed in kidney, which acts as a dominant-negative regulator of the longer isoform 1. Does not directly inhibit WNK4 and has no direct effect on sodium and chloride ion transport. Down-regulates sodium-chloride cotransporter activity indirectly by inhibiting isoform 1, it associates with isoform 1 and attenuates its kinase activity. In kidney, may play an important role regulating sodium and potassium balance. This Homo sapiens (Human) protein is Serine/threonine-protein kinase WNK1.